Here is a 233-residue protein sequence, read N- to C-terminus: Apoptosis regulator Bcl-2 (233 aa).

A BH4 motif is present at residues 10–30; it reads DNREIVLKYIHYKLSQRGYDW. The segment at 32–86 is disordered; the sequence is AGEDRPPVPPAPAPAAAPAAVAAAGASSHHRPEPPGSAAASEVPPAEGLRPAPPG. The BH3 motif lies at 87–101; the sequence is VHLALRQAGDEFSRR. A BH1 motif is present at residues 130-149; the sequence is ELFRDGVNWGRIVAFFEFGG. The short motif at 181–196 is the BH2 element; that stretch reads NWIQDNGGWDAFVELY. The helical transmembrane segment at 208–228 threads the bilayer; the sequence is WISLKTILSLVLVGACITLGA.

The protein belongs to the Bcl-2 family. Forms homodimers, and heterodimers with BAX, BAD, BAK and Bcl-X(L). Heterodimerization with BAX requires intact BH1 and BH2 motifs, and is necessary for anti-apoptotic activity. Also interacts with APAF1 and RAF-1. In adult chicken expressed, in thymus, spleen, kidney, heart, ovary and brain, with the highest levels in the thymus. In the embryo, highly levels expressed in all tissues with high levels in the bursa of Fabricius.

The protein resides in the mitochondrion outer membrane. Its subcellular location is the nucleus membrane. It localises to the endoplasmic reticulum membrane. The protein localises to the cytoplasm. In terms of biological role, suppresses apoptosis in a variety of cell systems including factor-dependent lymphohematopoietic and neural cells. Regulates cell death by controlling the mitochondrial membrane permeability. Appears to function in a feedback loop system with caspases. Inhibits caspase activity either by preventing the release of cytochrome c from the mitochondria and/or by binding to the apoptosis-activating factor (APAF-1). This Gallus gallus (Chicken) protein is Apoptosis regulator Bcl-2 (BCL2).